The following is a 1279-amino-acid chain: ATP-dependent helicase/nuclease subunit A (1279 aa).

The UvrD-like helicase ATP-binding domain occupies Thr-4 to Arg-499. Residue Ala-25–Thr-32 coordinates ATP. Positions Glu-526–Gly-853 constitute a UvrD-like helicase C-terminal domain.

The protein belongs to the helicase family. AddA subfamily. Heterodimer of AddA and AddB/RexB. It depends on Mg(2+) as a cofactor.

The enzyme catalyses Couples ATP hydrolysis with the unwinding of duplex DNA by translocating in the 3'-5' direction.. It catalyses the reaction ATP + H2O = ADP + phosphate + H(+). The heterodimer acts as both an ATP-dependent DNA helicase and an ATP-dependent, dual-direction single-stranded exonuclease. Recognizes the chi site generating a DNA molecule suitable for the initiation of homologous recombination. The AddA nuclease domain is required for chi fragment generation; this subunit has the helicase and 3' -&gt; 5' nuclease activities. This Clostridium botulinum (strain Kyoto / Type A2) protein is ATP-dependent helicase/nuclease subunit A.